Reading from the N-terminus, the 325-residue chain is Brain mitochondrial carrier protein 1 (325 aa).

6 helical membrane passes run 38–54, 112–128, 145–165, 199–215, 240–256, and 298–315; these read GLNW…SIVA, LRQA…YQSL, MICG…TDVL, GVVP…GVEL, VSSF…SNPV, and GFWP…IFFI. Solcar repeat units follow at residues 42–131, 139–224, and 233–323; these read KPFV…LKRL, ETLL…TKKH, and DTIL…LKRL.

This sequence belongs to the mitochondrial carrier (TC 2.A.29) family. In terms of assembly, homotetramer. Mainly expressed in brain, particularly abundant in cortex, hippocampus thalamus, amygdala and hypothalamus. Highly expressed in heart and kidney, but not liver or lung (at protein level). In the nervous system, expressed in cortex, basal ganglia, substantia nigra, cerebellum, and spinal cord (at protein level).

The protein localises to the mitochondrion inner membrane. The catalysed reaction is sulfite(in) + sulfate(out) = sulfite(out) + sulfate(in). The enzyme catalyses thiosulfate(in) + sulfate(out) = thiosulfate(out) + sulfate(in). It catalyses the reaction sulfate(out) + phosphate(in) = sulfate(in) + phosphate(out). It carries out the reaction oxalate(in) + sulfate(out) = oxalate(out) + sulfate(in). The catalysed reaction is malonate(in) + sulfate(out) = malonate(out) + sulfate(in). The enzyme catalyses maleate(in) + sulfate(out) = maleate(out) + sulfate(in). It catalyses the reaction (S)-malate(in) + sulfate(out) = (S)-malate(out) + sulfate(in). It carries out the reaction (3S)-citramalate(in) + sulfate(out) = (3S)-citramalate(out) + sulfate(in). The catalysed reaction is (3R)-citramalate(in) + sulfate(out) = (3R)-citramalate(out) + sulfate(in). The enzyme catalyses sulfate(out) + succinate(in) = sulfate(in) + succinate(out). It catalyses the reaction (S,S)-tartrate(in) + sulfate(out) = (S,S)-tartrate(out) + sulfate(in). It carries out the reaction (2R,3R)-tartrate(in) + sulfate(out) = (2R,3R)-tartrate(out) + sulfate(in). The catalysed reaction is D-aspartate(in) + sulfate(out) = D-aspartate(out) + sulfate(in). The enzyme catalyses L-aspartate(in) + sulfate(out) = L-aspartate(out) + sulfate(in). It catalyses the reaction sulfate(in) = sulfate(out). It carries out the reaction phosphate(in) = phosphate(out). The catalysed reaction is (S)-malate(out) = (S)-malate(in). The enzyme catalyses citrate(in) = citrate(out). It catalyses the reaction L-aspartate(out) = L-aspartate(in). It carries out the reaction L-glutamate(out) = L-glutamate(in). The catalysed reaction is H(+)(in) = H(+)(out). The enzyme catalyses chloride(in) = chloride(out). Its function is as follows. Transports inorganic anions (sulfate, sulfite, thiosulfate and phosphate) and, to a lesser extent, a variety of dicarboxylates (e.g. malonate, malate and citramalate) and, even more so, aspartate and glutamate and tricarboxylates. May catalyze the export of sulfite and thiosulfate (the hydrogen sulfide degradation products) from the mitochondria, thereby modulating the level of the hydrogen sulfide. Also can mediate a very low unidirectional transport of anions including sulfate, phosphate, (S)-malate, citrate, L-aspartate and L-glutamate. Maintains oxidative balance (through uncoupling activities) and ATP production (by modifying mitochondrial membrane potential). Is able to transport protons across lipid membranes. Also exhibits transmembrane chloride transport activity to a lesser extent. May modify mitochondrial respiratory efficiency and mitochondrial oxidant production. This is Brain mitochondrial carrier protein 1 from Mus musculus (Mouse).